A 20-amino-acid polypeptide reads, in one-letter code: Cupiennin-6f (20 aa).

In terms of tissue distribution, expressed by the venom gland.

It localises to the secreted. The chain is Cupiennin-6f from Cupiennius salei (American wandering spider).